A 77-amino-acid polypeptide reads, in one-letter code: uncharacterized protein (77 aa).

Positions 5–74 constitute an Inhibitor I9 domain; sequence SYIVQLKDSV…FEPDQEMHTM (70 aa).

Belongs to the protease inhibitor I9 family.

The protein localises to the cytoplasm. It localises to the nucleus. This is an uncharacterized protein from Schizosaccharomyces pombe (strain 972 / ATCC 24843) (Fission yeast).